A 512-amino-acid polypeptide reads, in one-letter code: Protein male-specific lethal-3 (512 aa).

The Chromo domain maps to 11 to 90 (FHKGEIVLCY…QLQRELAEAA (80 aa)). Residues 98–175 (YSYKGTPDKP…DGRLKGNRGR (78 aa)) form a disordered region. The segment covering 149 to 169 (RTRDNSGGKRKEKPPSGDGRL) has biased composition (basic and acidic residues). Residues 196-500 (QEDRIMMRVS…STALPQEDLQ (305 aa)) form the MRG domain.

As to quaternary structure, component of the male-specific lethal (MSL) histone acetyltransferase complex, composed of mof, mle, msl-1, msl-2 and msl-3 proteins, as well as roX1 and roX2 non-coding RNAs. Component of a maternal MSL subcomplex composed of mof, msl-1 and msl-3. Post-translationally, ubiquitinated by msl-2.

The protein resides in the nucleus. It is found in the chromosome. In terms of biological role, component of the male-specific lethal (MSL) histone acetyltransferase complex, a multiprotein complex essential for elevating transcription of the single X chromosome in the male (X chromosome dosage compensation). The MSL complex specifically associates with the single X chromosome in males and mediates formation of H4K16ac, promoting a two-fold activation of X chromosome. Acts as a histone reader that specifically recognizes and binds histone H3 trimethylated at 'Lys-36' (H3K36me3) and histone H4 monomethylated at 'Lys-20' (H4K20me1). Within the MSL complex, mediates the spreading of the MSL complex from initiation sites on the male X chromosome to flanking chromatin. Following initial recruitment of the MSL complex to male X chromosome by msl-2, msl-3 binds H3K36me3 and promotes spreading of the MSL complex in cis. In addition to its role in dosage compensation in males, promotes germline stem cell differentiation in females: recognizes and binds H3K36me3, promoting recruitment of the ATAC complex and transcription of genes, such as RpS19b. The protein is Protein male-specific lethal-3 of Drosophila melanogaster (Fruit fly).